A 434-amino-acid polypeptide reads, in one-letter code: G2/mitotic-specific cyclin-2 (434 aa).

The protein belongs to the cyclin family. Cyclin AB subfamily. As to quaternary structure, interacts with the CDC2 protein kinase to form a serine/threonine kinase holoenzyme complex also known as maturation promoting factor (MPF). The cyclin subunit imparts substrate specificity to the complex.

Its function is as follows. Essential for the control of the cell cycle at the G2/M (mitosis) transition. The sequence is that of G2/mitotic-specific cyclin-2 from Medicago sativa subsp. varia (Alfalfa).